The sequence spans 858 residues: DNA mismatch repair protein MutS (858 aa).

603 to 610 (GPNMSGKS) serves as a coordination point for ATP.

The protein belongs to the DNA mismatch repair MutS family.

Its function is as follows. This protein is involved in the repair of mismatches in DNA. It is possible that it carries out the mismatch recognition step. This protein has a weak ATPase activity. The chain is DNA mismatch repair protein MutS from Streptococcus agalactiae serotype Ia (strain ATCC 27591 / A909 / CDC SS700).